The chain runs to 282 residues: MSDFSMETLKNLRQQTGVGLTKCKEALEHAKGNLEDAVVYLRKLGLASAGKKEHRETKEGVIAARVDERGAALVEVNVETDFVANNSVFRAFVTSLLSDLLDHKLSDVEALARVMSSQEPSLSVEELKAVTMQTVGENIRISRAFYTPVNSGQSVGIYSHGNGKAVAIVFLSGSENQEALAKDIAMHIVASQPQFLSKESVPQEILEREREVFSSQVAGKPQEVVEKITQGKFKAFFQEACLLEQAFIKDPEVTIQGLIDRAAKASGEPLRVEHFVFWKMGA.

The interval 80–83 (TDFV) is involved in Mg(2+) ion dislocation from EF-Tu.

The protein belongs to the EF-Ts family.

The protein resides in the cytoplasm. Associates with the EF-Tu.GDP complex and induces the exchange of GDP to GTP. It remains bound to the aminoacyl-tRNA.EF-Tu.GTP complex up to the GTP hydrolysis stage on the ribosome. This is Elongation factor Ts from Chlamydia trachomatis serovar L2 (strain ATCC VR-902B / DSM 19102 / 434/Bu).